The chain runs to 536 residues: Caspase A (536 aa).

The propeptide at 1–273 is removed in mature form by autoprocessing; it reads MVLKTIEDNC…DSQSRMPRTD (273 aa). Residues H364 and C406 contribute to the active site.

This sequence belongs to the peptidase C14A family. Heterodimer formed by the tight association of the large subunit p16 and the small subunit p14. In terms of processing, autocatalytic cleavage removes the propeptide and generates the two active subunits p16 and p14 in vitro. Cannot be cleaved by ced-3 in vitro. In terms of tissue distribution, isoform a: Expression is restricted to the late germline pachytene stage of meiosis I in both L4 larvae and adult hermaphrodite gonads. Isoform b: Expression is restricted to the late germline pachytene stage of meiosis I in both L4 larvae and adult hermaphrodite gonads.

It catalyses the reaction Strict requirement for an Asp residue at position P1 and has a preferred cleavage sequence of Tyr-Val-Ala-Asp-|-.. Its activity is regulated as follows. Inhibited by cysteine protease inhibitor iodoacetic acid (CH3COOI) but not by N-[N-(L-3-transcarboxirane-2-carbonyl)-leucyl]-agmatine (E-64) or benzyloxycarbonyl-DEVD-fluoro-methyl ketone (Z-DEVD-FMK). In terms of biological role, cysteine protease which, in vitro, cleaves itself and caspase ced-3 into their mature active forms. Also cleaves, in vitro, inactive caspase csp-2 isoform b. Required maternally to induce apoptosis in a subset of cells fated to die during embryogenesis, mostly independently of the ced-9, ced-4 and ced-3 canonical apoptosis pathway. Involved in the degeneration of dopaminergic CEP neurons in response to high Mn(2+) levels. Functionally, dispensable for regulating apoptosis during embryogenesis. The sequence is that of Caspase A from Caenorhabditis elegans.